The following is a 582-amino-acid chain: Peptidyl-prolyl cis-trans isomerase FKBP10 (582 aa).

An N-terminal signal peptide occupies residues Met-1–Ala-26. PPIase FKBP-type domains lie at Gly-62–Trp-150, Gly-174–His-262, and Gly-286–His-374. Residues Asn-70, Asn-182, Asn-294, Asn-310, Asn-352, Asn-393, and Asn-407 are each glycosylated (N-linked (GlcNAc...) asparagine). The region spanning Gly-399–Glu-486 is the PPIase FKBP-type 4 domain. EF-hand domains lie at Trp-497 to Glu-532 and Asp-542 to Arg-577. Ca(2+)-binding residues include Asp-510, Asn-512, Asp-514, Glu-516, Glu-521, Asp-555, Asn-557, Asp-559, Lys-561, and Glu-566. Residues Gly-533 to Leu-582 are disordered. Over residues Arg-556 to Leu-582 the composition is skewed to basic and acidic residues. Positions His-579–Leu-582 match the Prevents secretion from ER motif.

Glycosylated and phosphorylated.

The protein localises to the endoplasmic reticulum lumen. It catalyses the reaction [protein]-peptidylproline (omega=180) = [protein]-peptidylproline (omega=0). With respect to regulation, inhibited by both FK506 and rapamycin, but not by cyclosporin A. PPIases accelerate the folding of proteins during protein synthesis. The protein is Peptidyl-prolyl cis-trans isomerase FKBP10 (FKBP10) of Homo sapiens (Human).